Consider the following 347-residue polypeptide: ATPase GET3 (347 aa).

Lysine 26–threonine 33 is a binding site for ATP. The active site involves aspartate 57. ATP contacts are provided by glutamate 240 and asparagine 267. Residues cysteine 279 and cysteine 282 each coordinate Zn(2+).

Belongs to the arsA ATPase family. In terms of assembly, homodimer. Component of the Golgi to ER traffic (GET) complex, which is composed of GET1, GET2 and GET3. Within the complex, GET1 and GET2 form a heterotetramer which is stabilized by phosphatidylinositol binding and which binds to the GET3 homodimer. Interacts with the chloride channel protein GEF1.

The protein resides in the cytoplasm. The protein localises to the endoplasmic reticulum. It is found in the golgi apparatus. Its function is as follows. ATPase required for the post-translational delivery of tail-anchored (TA) proteins to the endoplasmic reticulum. Recognizes and selectively binds the transmembrane domain of TA proteins in the cytosol. This complex then targets to the endoplasmic reticulum by membrane-bound receptors GET1 and GET2, where the tail-anchored protein is released for insertion. This process is regulated by ATP binding and hydrolysis. ATP binding drives the homodimer towards the closed dimer state, facilitating recognition of newly synthesized TA membrane proteins. ATP hydrolysis is required for insertion. Subsequently, the homodimer reverts towards the open dimer state, lowering its affinity for the GET1-GET2 receptor, and returning it to the cytosol to initiate a new round of targeting. Cooperates with the HDEL receptor ERD2 to mediate the ATP-dependent retrieval of resident ER proteins that contain a C-terminal H-D-E-L retention signal from the Golgi to the ER. Involved in low-level resistance to the oxyanions arsenite and arsenate, and in heat tolerance. The polypeptide is ATPase GET3 (Scheffersomyces stipitis (strain ATCC 58785 / CBS 6054 / NBRC 10063 / NRRL Y-11545) (Yeast)).